The primary structure comprises 121 residues: ATP synthase epsilon chain (121 aa).

Belongs to the ATPase epsilon chain family. In terms of assembly, F-type ATPases have 2 components, CF(1) - the catalytic core - and CF(0) - the membrane proton channel. CF(1) has five subunits: alpha(3), beta(3), gamma(1), delta(1), epsilon(1). CF(0) has three main subunits: a, b and c.

The protein localises to the cell membrane. In terms of biological role, produces ATP from ADP in the presence of a proton gradient across the membrane. This Mycobacterium bovis (strain ATCC BAA-935 / AF2122/97) protein is ATP synthase epsilon chain (atpC).